Reading from the N-terminus, the 69-residue chain is uncharacterized protein (69 aa).

The Cytoplasmic portion of the chain corresponds to 1-15; the sequence is MLLYIVIIVACIISK. Residues 16–36 form a helical membrane-spanning segment; that stretch reads LVPNEYWAIHLFFIIMIFMVY. At 37-69 the chain is on the extracellular side; it reads MYEKLDIHQKYQFWNYTMSGLSGHNVQITCKCY. The N-linked (GlcNAc...) asparagine; by host glycan is linked to N51.

The protein belongs to the asfivirus X69R family.

It is found in the host membrane. This is an uncharacterized protein from Ornithodoros (relapsing fever ticks).